Reading from the N-terminus, the 406-residue chain is Tryptophan synthase beta chain (406 aa).

At K99 the chain carries N6-(pyridoxal phosphate)lysine.

It belongs to the TrpB family. In terms of assembly, tetramer of two alpha and two beta chains. It depends on pyridoxal 5'-phosphate as a cofactor.

It carries out the reaction (1S,2R)-1-C-(indol-3-yl)glycerol 3-phosphate + L-serine = D-glyceraldehyde 3-phosphate + L-tryptophan + H2O. Its pathway is amino-acid biosynthesis; L-tryptophan biosynthesis; L-tryptophan from chorismate: step 5/5. Its function is as follows. The beta subunit is responsible for the synthesis of L-tryptophan from indole and L-serine. The protein is Tryptophan synthase beta chain of Rhizobium meliloti (strain 1021) (Ensifer meliloti).